Here is a 218-residue protein sequence, read N- to C-terminus: Superoxide dismutase [Mn], mitochondrial (218 aa).

The transit peptide at 1–21 (MLRFLSKNSVAAIRNVSIARG) directs the protein to the mitochondrion. Mn(2+)-binding residues include His50 and His96. At Ser129 the chain carries Phosphoserine. Mn(2+)-binding residues include Asp181 and His185.

The protein belongs to the iron/manganese superoxide dismutase family. Homodimer. It depends on Mn(2+) as a cofactor.

The protein localises to the mitochondrion matrix. The catalysed reaction is 2 superoxide + 2 H(+) = H2O2 + O2. Functionally, destroys superoxide anion radicals which are normally produced within the cells and which are toxic to biological systems. The chain is Superoxide dismutase [Mn], mitochondrial (sod2) from Schizosaccharomyces pombe (strain 972 / ATCC 24843) (Fission yeast).